Reading from the N-terminus, the 213-residue chain is Probable chemoreceptor glutamine deamidase CheD (213 aa).

Residues 1-12 (MNRHRPHSHRSK) are compositionally biased toward basic residues. Positions 1 to 25 (MNRHRPHSHRSKPASTQDQPDSVRR) are disordered.

The protein belongs to the CheD family.

It carries out the reaction L-glutaminyl-[protein] + H2O = L-glutamyl-[protein] + NH4(+). Probably deamidates glutamine residues to glutamate on methyl-accepting chemotaxis receptors (MCPs), playing an important role in chemotaxis. In Rhodopseudomonas palustris (strain BisA53), this protein is Probable chemoreceptor glutamine deamidase CheD.